The sequence spans 433 residues: Enolase (433 aa).

Position 167 (glutamine 167) interacts with (2R)-2-phosphoglycerate. Residue glutamate 209 is the Proton donor of the active site. 3 residues coordinate Mg(2+): aspartate 246, glutamate 291, and aspartate 318. Positions 343, 372, 373, and 394 each coordinate (2R)-2-phosphoglycerate. Lysine 343 acts as the Proton acceptor in catalysis.

It belongs to the enolase family. As to quaternary structure, component of the RNA degradosome, a multiprotein complex involved in RNA processing and mRNA degradation. The cofactor is Mg(2+).

It localises to the cytoplasm. The protein resides in the secreted. Its subcellular location is the cell surface. It catalyses the reaction (2R)-2-phosphoglycerate = phosphoenolpyruvate + H2O. It functions in the pathway carbohydrate degradation; glycolysis; pyruvate from D-glyceraldehyde 3-phosphate: step 4/5. Functionally, catalyzes the reversible conversion of 2-phosphoglycerate (2-PG) into phosphoenolpyruvate (PEP). It is essential for the degradation of carbohydrates via glycolysis. The chain is Enolase from Actinobacillus succinogenes (strain ATCC 55618 / DSM 22257 / CCUG 43843 / 130Z).